The chain runs to 92 residues: RNA-binding protein Hfq (92 aa).

The Sm domain maps to 9–68 (DPYLNALRRERIPVSIYLVNGIKLQGQIESFDQFVILLKNTVSQMVYKHAISTVVPARSV). The span at 69 to 81 (SHNNGGTSHTQQA) shows a compositional bias: polar residues. The disordered stretch occupies residues 69–92 (SHNNGGTSHTQQAPAVEAVADKAE).

This sequence belongs to the Hfq family. As to quaternary structure, homohexamer.

Its function is as follows. RNA chaperone that binds small regulatory RNA (sRNAs) and mRNAs to facilitate mRNA translational regulation in response to envelope stress, environmental stress and changes in metabolite concentrations. Also binds with high specificity to tRNAs. The chain is RNA-binding protein Hfq from Actinobacillus pleuropneumoniae serotype 5b (strain L20).